Reading from the N-terminus, the 294-residue chain is ATP synthase gamma chain (294 aa).

It belongs to the ATPase gamma chain family. As to quaternary structure, F-type ATPases have 2 components, CF(1) - the catalytic core - and CF(0) - the membrane proton channel. CF(1) has five subunits: alpha(3), beta(3), gamma(1), delta(1), epsilon(1). CF(0) has three main subunits: a, b and c.

The protein localises to the cell inner membrane. Produces ATP from ADP in the presence of a proton gradient across the membrane. The gamma chain is believed to be important in regulating ATPase activity and the flow of protons through the CF(0) complex. In Nitratiruptor sp. (strain SB155-2), this protein is ATP synthase gamma chain.